The primary structure comprises 379 residues: Putative nucleosome assembly protein C2D10.11C (379 aa).

Residues 1-10 (MSKGPGDFKK) are compositionally biased toward basic and acidic residues. Disordered regions lie at residues 1–30 (MSKG…DVHL) and 345–379 (SDFN…EISD). A compositionally biased stretch (polar residues) spans 16-28 (AAQTPQNTPSSDV).

This sequence belongs to the nucleosome assembly protein (NAP) family.

It localises to the nucleus. This Schizosaccharomyces pombe (strain 972 / ATCC 24843) (Fission yeast) protein is Putative nucleosome assembly protein C2D10.11C.